A 548-amino-acid polypeptide reads, in one-letter code: Synaptic vesicle 2-related protein (548 aa).

At 1 to 87 (MEEDLFQLRQ…GFGKFQWKLS (87 aa)) the chain is on the cytoplasmic side. 2 positions are modified to phosphoserine: Ser25 and Ser31. A helical membrane pass occupies residues 88 to 108 (VLTGLAWMADAMEMMILSILA). The Vesicular segment spans residues 109–122 (PQLHCEWRLPSWQV). Residues 123–143 (ALLTSVVFVGMMSSSTLWGNI) form a helical membrane-spanning segment. At 144-156 (SDQYGRKTGLKIS) the chain is on the cytoplasmic side. Residues 157-177 (VLWTLYYGILSAFAPVYSWIL) form a helical membrane-spanning segment. Topologically, residues 178–180 (VLR) are vesicular. Residues 181–201 (GLVGFGIGGVPQSVTLYAEFL) traverse the membrane as a helical segment. The Cytoplasmic segment spans residues 202–209 (PMKARAKC). Residues 210-230 (ILLIEVFWAIGTVFEVVLAVF) form a helical membrane-spanning segment. Residues 231–238 (VMPSLGWR) are Vesicular-facing. Residues 239-259 (WLLILSAVPLLLFAVLCFWLP) traverse the membrane as a helical segment. At 260–316 (ESARYDVLSGNQEKAIATLKRIATENGAPMPLGKLIISRQEDRGKMRDLFTPHFRWT) the chain is on the cytoplasmic side. The chain crosses the membrane as a helical span at residues 317–337 (TLLLWFIWFSNAFSYYGLVLL). Residues 338-373 (TTELFQAGDVCGISSRKKAVEAKCSLACEYLSEEDY) lie on the Vesicular side of the membrane. Residues 374 to 394 (MDLLWTTLSEFPGVLVTLWII) traverse the membrane as a helical segment. The Cytoplasmic portion of the chain corresponds to 395–401 (DRLGRKK). Residues 402–422 (TMALCFVIFSFCSLLLFICVG) form a helical membrane-spanning segment. Topologically, residues 423–424 (RN) are vesicular. A helical membrane pass occupies residues 425–445 (VLTLLLFIARAFISGGFQAAY). At 446–457 (VYTPEVYPTATR) the chain is on the cytoplasmic side. The chain crosses the membrane as a helical span at residues 458 to 478 (ALGLGTCSGMARVGALITPFI). Residues 479–489 (AQVMLESSVYL) are Vesicular-facing. The chain crosses the membrane as a helical span at residues 490–510 (TLAVYSGCCLLAALASCFLPI). At 511-548 (ETKGRGLQESSHREWGQEMVGRGMHGADVTRSNSGSQE) the chain is on the cytoplasmic side. Ser542 is modified (phosphoserine).

Belongs to the major facilitator superfamily.

It localises to the cytoplasmic vesicle. The protein localises to the secretory vesicle. Its subcellular location is the synaptic vesicle membrane. This chain is Synaptic vesicle 2-related protein (SVOP), found in Pongo abelii (Sumatran orangutan).